The following is a 1235-amino-acid chain: Receptor-type adenylate cyclase ESAG 4 (1235 aa).

The tract at residues 1-20 is disordered; the sequence is MNMLHLSDRNASLAPSGGEH. The Cytoplasmic portion of the chain corresponds to 1-32; sequence MNMLHLSDRNASLAPSGGEHSLPTGGAVCRDA. Residues 33–53 form a helical membrane-spanning segment; that stretch reads MDILPVILRAPVALLLLLVVL. Over 54–858 the chain is Extracellular; the sequence is PQLSVGAEAN…SNAGRISGAS (805 aa). N-linked (GlcNAc...) asparagine glycosylation is found at asparagine 63, asparagine 90, asparagine 97, asparagine 362, asparagine 531, asparagine 566, asparagine 705, and asparagine 830. The chain crosses the membrane as a helical span at residues 859–879; the sequence is LVGIIIGGALALFLVVALGVV. Residues 880–1235 are Cytoplasmic-facing; the sequence is PYFFLRNTVI…VSSQVEERLL (356 aa). Residues 900–1054 enclose the Guanylate cyclase domain; sequence TLIFTDIESS…RTSNMAARTE (155 aa). Positions 905 and 948 each coordinate Mg(2+).

The protein belongs to the adenylyl cyclase class-3 family. Requires Mg(2+) as cofactor.

Its subcellular location is the membrane. The catalysed reaction is ATP = 3',5'-cyclic AMP + diphosphate. Its function is as follows. Could act as a receptor for an unknown ligand. This is Receptor-type adenylate cyclase ESAG 4 (ESAG4) from Trypanosoma brucei brucei.